The chain runs to 413 residues: Acetate kinase (413 aa).

Asn-7 provides a ligand contact to Mg(2+). Lys-14 lines the ATP pocket. Residue Arg-98 coordinates substrate. Asp-157 serves as the catalytic Proton donor/acceptor. Residues 216–220, 291–293, and 339–343 each bind ATP; these read HIGNG, DLR, and GVGEN. Mg(2+) is bound at residue Glu-392.

Belongs to the acetokinase family. As to quaternary structure, homodimer. Mg(2+) is required as a cofactor. The cofactor is Mn(2+).

It is found in the cytoplasm. The catalysed reaction is acetate + ATP = acetyl phosphate + ADP. Its pathway is metabolic intermediate biosynthesis; acetyl-CoA biosynthesis; acetyl-CoA from acetate: step 1/2. In terms of biological role, catalyzes the formation of acetyl phosphate from acetate and ATP. Can also catalyze the reverse reaction. This chain is Acetate kinase, found in Synechocystis sp. (strain ATCC 27184 / PCC 6803 / Kazusa).